A 110-amino-acid chain; its full sequence is Movement protein TGB2 (110 aa).

Residues 1–10 (MSGAHHLTPP) are Cytoplasmic-facing. Residues 11–34 (TDYGKPVLAASIGISLALLVYTAT) traverse the membrane as a helical segment. Over 35–76 (RSTLPHVGDNLHALPHGGRYVDGTKSISYFSPSASKTRDPFP) the chain is Lumenal. The helical transmembrane segment at 77 to 92 (FAFLLILTLSGLILLL) threads the bilayer. Over 93-110 (SRRRSNPHSCPSCGTPHA) the chain is Cytoplasmic.

This sequence belongs to the Tymovirales TGBp2 protein family.

The protein resides in the host endoplasmic reticulum membrane. Its function is as follows. Plays a role in viral cell-to-cell propagation, by facilitating genome transport to neighboring plant cells through plasmosdesmata,. This chain is Movement protein TGB2, found in Plantago asiatica (P1AMV).